Reading from the N-terminus, the 292-residue chain is Mycothiol acetyltransferase (292 aa).

N-acetyltransferase domains are found at residues 13-168 (ALDR…KWLQ) and 159-292 (KSVA…VYEK). Position 40 (E40) interacts with 1D-myo-inositol 2-(L-cysteinylamino)-2-deoxy-alpha-D-glucopyranoside. 77–79 (LAV) is an acetyl-CoA binding site. The 1D-myo-inositol 2-(L-cysteinylamino)-2-deoxy-alpha-D-glucopyranoside site is built by E179, K218, and E226. Residues 230–232 (VGL) and 237–243 (RGRGLGD) each bind acetyl-CoA. Residue Y264 coordinates 1D-myo-inositol 2-(L-cysteinylamino)-2-deoxy-alpha-D-glucopyranoside.

It belongs to the acetyltransferase family. MshD subfamily. As to quaternary structure, monomer.

The enzyme catalyses 1D-myo-inositol 2-(L-cysteinylamino)-2-deoxy-alpha-D-glucopyranoside + acetyl-CoA = mycothiol + CoA + H(+). Its function is as follows. Catalyzes the transfer of acetyl from acetyl-CoA to desacetylmycothiol (Cys-GlcN-Ins) to form mycothiol. The polypeptide is Mycothiol acetyltransferase (Corynebacterium glutamicum (strain ATCC 13032 / DSM 20300 / JCM 1318 / BCRC 11384 / CCUG 27702 / LMG 3730 / NBRC 12168 / NCIMB 10025 / NRRL B-2784 / 534)).